A 287-amino-acid chain; its full sequence is Phosphatidylserine decarboxylase proenzyme (287 aa).

Catalysis depends on charge relay system; for autoendoproteolytic cleavage activity residues Asp89, His146, and Ser252. Ser252 functions as the Schiff-base intermediate with substrate; via pyruvic acid; for decarboxylase activity in the catalytic mechanism. Ser252 is subject to Pyruvic acid (Ser); by autocatalysis.

This sequence belongs to the phosphatidylserine decarboxylase family. PSD-B subfamily. Prokaryotic type I sub-subfamily. In terms of assembly, heterodimer of a large membrane-associated beta subunit and a small pyruvoyl-containing alpha subunit. The cofactor is pyruvate. Is synthesized initially as an inactive proenzyme. Formation of the active enzyme involves a self-maturation process in which the active site pyruvoyl group is generated from an internal serine residue via an autocatalytic post-translational modification. Two non-identical subunits are generated from the proenzyme in this reaction, and the pyruvate is formed at the N-terminus of the alpha chain, which is derived from the carboxyl end of the proenzyme. The autoendoproteolytic cleavage occurs by a canonical serine protease mechanism, in which the side chain hydroxyl group of the serine supplies its oxygen atom to form the C-terminus of the beta chain, while the remainder of the serine residue undergoes an oxidative deamination to produce ammonia and the pyruvoyl prosthetic group on the alpha chain. During this reaction, the Ser that is part of the protease active site of the proenzyme becomes the pyruvoyl prosthetic group, which constitutes an essential element of the active site of the mature decarboxylase.

The protein localises to the cell membrane. The catalysed reaction is a 1,2-diacyl-sn-glycero-3-phospho-L-serine + H(+) = a 1,2-diacyl-sn-glycero-3-phosphoethanolamine + CO2. It functions in the pathway phospholipid metabolism; phosphatidylethanolamine biosynthesis; phosphatidylethanolamine from CDP-diacylglycerol: step 2/2. Catalyzes the formation of phosphatidylethanolamine (PtdEtn) from phosphatidylserine (PtdSer). This is Phosphatidylserine decarboxylase proenzyme from Shewanella amazonensis (strain ATCC BAA-1098 / SB2B).